A 184-amino-acid chain; its full sequence is UPF0316 protein BPUM_0594 (184 aa).

Helical transmembrane passes span 9 to 29 (AFTMVLIILVINIVYVSFSTM), 41 to 61 (AAAFAGTIEMLIYVIGLSIVL), and 67 to 87 (IQNVIAYALGYGMGIIVGMKI).

It belongs to the UPF0316 family.

The protein localises to the cell membrane. The chain is UPF0316 protein BPUM_0594 from Bacillus pumilus (strain SAFR-032).